A 518-amino-acid polypeptide reads, in one-letter code: GMP synthase [glutamine-hydrolyzing] (518 aa).

The region spanning 13–203 is the Glutamine amidotransferase type-1 domain; that stretch reads KIIVLDFGSQ…ALNICGCKGD (191 aa). The active-site Nucleophile is cysteine 90. Catalysis depends on residues histidine 177 and glutamate 179. A GMPS ATP-PPase domain is found at 204–393; the sequence is WTMENFSEVE…LGMPDAIVWR (190 aa). 231–237 lines the ATP pocket; the sequence is SGGVDSS.

Homodimer.

It catalyses the reaction XMP + L-glutamine + ATP + H2O = GMP + L-glutamate + AMP + diphosphate + 2 H(+). The protein operates within purine metabolism; GMP biosynthesis; GMP from XMP (L-Gln route): step 1/1. Functionally, catalyzes the synthesis of GMP from XMP. This is GMP synthase [glutamine-hydrolyzing] from Listeria innocua serovar 6a (strain ATCC BAA-680 / CLIP 11262).